Consider the following 376-residue polypeptide: E3 ubiquitin-protein ligase RNF133 (376 aa).

The PA domain maps to 65–167 (SSTLKRVAGV…LKGTEIFHLI (103 aa)). The chain crosses the membrane as a helical span at residues 190-210 (YLVSFVIVTTATLAYFIFYHI). The segment at 256-297 (CVICFEHYKPNDIVRILTCKHFFHKNCIDPWILSHGTCPICK) adopts an RING-type; atypical zinc-finger fold. Positions 328-376 (TLSPSEEETNNEVSPAGTSDKVIHVEENPTSQNNDSQPHSVVEDVHPSP) are disordered. A compositionally biased stretch (polar residues) spans 355–366 (NPTSQNNDSQPH).

As to quaternary structure, interacts with E3 ligase UBE2J1. Post-translationally, auto-ubiquitinated.

It is found in the endoplasmic reticulum membrane. The enzyme catalyses S-ubiquitinyl-[E2 ubiquitin-conjugating enzyme]-L-cysteine + [acceptor protein]-L-lysine = [E2 ubiquitin-conjugating enzyme]-L-cysteine + N(6)-ubiquitinyl-[acceptor protein]-L-lysine.. Its pathway is protein modification; protein ubiquitination. Functionally, has E3 ubiquitin-protein ligase activity. Plays a role in male fecundity through the interaction with the E2 ubituitin-protein ligase UBE2J1. The sequence is that of E3 ubiquitin-protein ligase RNF133 (RNF133) from Macaca fascicularis (Crab-eating macaque).